The following is a 689-amino-acid chain: Glycine--tRNA ligase beta subunit (689 aa).

The protein belongs to the class-II aminoacyl-tRNA synthetase family. In terms of assembly, tetramer of two alpha and two beta subunits.

The protein localises to the cytoplasm. It catalyses the reaction tRNA(Gly) + glycine + ATP = glycyl-tRNA(Gly) + AMP + diphosphate. The chain is Glycine--tRNA ligase beta subunit from Citrobacter koseri (strain ATCC BAA-895 / CDC 4225-83 / SGSC4696).